A 337-amino-acid polypeptide reads, in one-letter code: Inositol 2-dehydrogenase (337 aa).

This sequence belongs to the Gfo/Idh/MocA family. Homotetramer.

It catalyses the reaction myo-inositol + NAD(+) = scyllo-inosose + NADH + H(+). Functionally, involved in the oxidation of myo-inositol (MI) to 2-keto-myo-inositol (2KMI or 2-inosose). The sequence is that of Inositol 2-dehydrogenase from Ralstonia nicotianae (strain ATCC BAA-1114 / GMI1000) (Ralstonia solanacearum).